Here is a 180-residue protein sequence, read N- to C-terminus: uncharacterized protein (180 aa).

The signal sequence occupies residues 1 to 30 (MRHKIITFILAVVVIIIIGNMIGGGGGSEA). The tract at residues 25–46 (GGGSEATSKTSSSSKAETEKTY) is disordered. The span at 29–39 (EATSKTSSSSK) shows a compositional bias: low complexity.

It localises to the secreted. This is an uncharacterized protein from Bacillus subtilis (strain 168).